Consider the following 367-residue polypeptide: Peptide chain release factor 2 (367 aa).

Residue Q254 is modified to N5-methylglutamine.

The protein belongs to the prokaryotic/mitochondrial release factor family. In terms of processing, methylated by PrmC. Methylation increases the termination efficiency of RF2.

The protein localises to the cytoplasm. In terms of biological role, peptide chain release factor 2 directs the termination of translation in response to the peptide chain termination codons UGA and UAA. This chain is Peptide chain release factor 2, found in Leptospira interrogans serogroup Icterohaemorrhagiae serovar Lai (strain 56601).